Reading from the N-terminus, the 338-residue chain is Ribosomal RNA small subunit methyltransferase H (338 aa).

S-adenosyl-L-methionine-binding positions include 53 to 55 (GGH), D72, Y99, D123, and Q130. 2 disordered regions span residues 276–297 (EITPRSKSKSPEGLPVELPGMG) and 304–323 (TRGAERASEQEVEENPRSAP).

Belongs to the methyltransferase superfamily. RsmH family.

Its subcellular location is the cytoplasm. It carries out the reaction cytidine(1402) in 16S rRNA + S-adenosyl-L-methionine = N(4)-methylcytidine(1402) in 16S rRNA + S-adenosyl-L-homocysteine + H(+). Functionally, specifically methylates the N4 position of cytidine in position 1402 (C1402) of 16S rRNA. This is Ribosomal RNA small subunit methyltransferase H from Rhodococcus jostii (strain RHA1).